A 152-amino-acid chain; its full sequence is Ribosome maturation factor RimP (152 aa).

The protein belongs to the RimP family.

It is found in the cytoplasm. Its function is as follows. Required for maturation of 30S ribosomal subunits. This Burkholderia multivorans (strain ATCC 17616 / 249) protein is Ribosome maturation factor RimP.